The sequence spans 506 residues: MSAIVGLCLLSEKVVLSRSLTDEVSKLYKLNRGNVKEPRKYATERMSTQSKPVALQVPVSTIVLDYKDEDFIKQNPTYSAMDIIGSPSNTAPQTAFQSIMPSLSALFNTPFIQGAFRHRIISSMGPEISYLVMVIGPPSGFMDTPNVSSAQSSVHTVSNADVDLNDIIAINSTMAKSTKLVSASTLQAMLVNDVYDRCMDLDGILLSQALPFFRNYVNVQSKGSLPPAVAACLNTPIKELFSMGSGKREPLTLEFRKDNEGQCLGIVLPKGHEGDTLSSRYPAVFINESEPFSDKERSELSELKRTDSDAYEKLYSETISKHVSDGSYGNRVIISHKMSRLSNGGVKIIGRFKISDFNTVKKNLSSRSGEVDSAKEQWEALSGNGLVTDSNISMLHDKILDTITSNKPGVVLRDGNKKSENIVVCFKNGFPNKKHSLLQLTKNGISVVSLDELTDAGILVESTGPDRVRRSPKALANKLSSFKGRKVTLDVDNMSTEALIQKLSAL.

RNA-binding stretches follow at residues 128-249 and 325-355; these read ISYL…GKRE and DGSY…FKIS.

The protein belongs to the phytoreovirus protein P7 family.

The protein resides in the virion. The protein localises to the host cytoplasm. Functionally, probable component of the transcriptional machinery present in the inner capsid. Displays dsRNA binding activity and may play an important role in the sorting of viral RNA and virion assembly. Together with the RNA-directed RNA polymerase P1 and capping enzyme P5, forms an transcriptional complex positioned near the channels situated at each of the five-fold vertices of the core. This chain is Protein P7, found in Alopecurus aequalis (Barnyard grass).